The following is a 142-amino-acid chain: Large ribosomal subunit protein uL13 (142 aa).

This sequence belongs to the universal ribosomal protein uL13 family. In terms of assembly, part of the 50S ribosomal subunit.

Its function is as follows. This protein is one of the early assembly proteins of the 50S ribosomal subunit, although it is not seen to bind rRNA by itself. It is important during the early stages of 50S assembly. The polypeptide is Large ribosomal subunit protein uL13 (Cupriavidus necator (strain ATCC 17699 / DSM 428 / KCTC 22496 / NCIMB 10442 / H16 / Stanier 337) (Ralstonia eutropha)).